Here is a 562-residue protein sequence, read N- to C-terminus: Putative transport protein ECA2683 (562 aa).

Transmembrane regions (helical) follow at residues 8–28, 32–52, 66–86, 93–113, 116–136, and 158–178; these read LLNG…LCLG, LGPV…LLGQ, FMLF…SIFF, FMLA…LGKL, WGIG…PVLV, and HLSL…IFGA. 2 consecutive RCK C-terminal domains span residues 202 to 288 and 290 to 373; these read LDVD…NFRD and KEVF…RIGF. 5 helical membrane passes run 383–403, 406–426, 447–467, 478–498, and 537–557; these read LLAF…TIQF, FTFG…LGFL, FGLM…INSS, SGLI…AYVL, and GTYA…VVIW.

The protein belongs to the AAE transporter (TC 2.A.81) family. YbjL subfamily.

It is found in the cell membrane. The sequence is that of Putative transport protein ECA2683 from Pectobacterium atrosepticum (strain SCRI 1043 / ATCC BAA-672) (Erwinia carotovora subsp. atroseptica).